The chain runs to 798 residues: Nucleolin homolog 1 (798 aa).

A disordered region spans residues 1 to 548; sequence MGFDSPRGRG…IISEEERRRQ (548 aa). Residues 8–34 show a composition bias toward gly residues; sequence GRGGGGFRGGRGGGSGFTPRGGGGGFR. 3 stretches are compositionally biased toward basic and acidic residues: residues 59 to 75, 88 to 98, and 106 to 116; these read GGDR…DREG, GGDRGGFRGGD, and GGDRGNFRGGD. 2 stretches are compositionally biased toward gly residues: residues 150-164 and 171-184; these read RGGG…GRGG and GGRG…GGSR. 4 stretches are compositionally biased toward acidic residues: residues 196–205, 226–242, 258–278, and 287–317; these read SDGDDDEEEE, DDSG…DEEP, EDSD…DDDA, and VEED…EETE. The segment covering 328–350 has biased composition (polar residues); that stretch reads SLKSVDSTKGKQVNLSKVATPTT. Composition is skewed to acidic residues over residues 378–404 and 424–450; these read DDDS…EEED and IEED…EEDT. Residues 467-476 are compositionally biased toward low complexity; it reads AANRAAASAA. The span at 478–504 shows a compositional bias: acidic residues; sequence DSDEDEDEEDEEDVEEEDEEEEEEEDI. A compositionally biased stretch (basic and acidic residues) spans 532 to 548; that stretch reads VKSDGKSIISEEERRRQ. The RRM domain maps to 638-713; that stretch reads LQLFINALPG…HLVDVFYARH (76 aa). Residues 736–798 are disordered; sequence PKVAADSSGD…FKKTGFKGKK (63 aa). Positions 743–762 are enriched in acidic residues; it reads SGDDSEEVASSDEGIQEVEE. Positions 783 to 798 are enriched in basic residues; sequence QQKKPQFKKTGFKGKK.

As to quaternary structure, identified in an mRNP granule complex containing untranslated mRNAs.

It is found in the nucleus. It localises to the nucleolus. Its function is as follows. Nucleolin is the major nucleolar protein of growing eukaryotic cells. It is found associated with intranucleolar chromatin and pre-ribosomal particles. It induces chromatin decondensation by binding to histone H1. It is thought to play a role in pre-rRNA transcription and ribosome assembly. May play a role in the process of transcriptional elongation. Involved in phase separation into sub-nucleolar condensates. This is Nucleolin homolog 1 from Caenorhabditis elegans.